Consider the following 293-residue polypeptide: 33 kDa chaperonin (293 aa).

Cystine bridges form between Cys230-Cys232 and Cys263-Cys266.

Belongs to the HSP33 family. In terms of processing, under oxidizing conditions two disulfide bonds are formed involving the reactive cysteines. Under reducing conditions zinc is bound to the reactive cysteines and the protein is inactive.

The protein localises to the cytoplasm. Redox regulated molecular chaperone. Protects both thermally unfolding and oxidatively damaged proteins from irreversible aggregation. Plays an important role in the bacterial defense system toward oxidative stress. This is 33 kDa chaperonin from Edwardsiella ictaluri (strain 93-146).